A 343-amino-acid chain; its full sequence is GTPase Obg (343 aa).

Residues 1-158 form the Obg domain; the sequence is MFIDEAKIRV…FTLRLELKVL (158 aa). Positions 121 to 140 are disordered; it reads RGGRGNQHFATSTHQAPREH. The 175-residue stretch at 159–333 folds into the OBG-type G domain; that stretch reads ADIGIVGYPN…LKYAMAERVR (175 aa). Residues 165–172, 190–194, 215–218, 286–289, and 314–316 each bind GTP; these read GYPNVGKS, FTTLE, DIPG, SKID, and SAV. Mg(2+) contacts are provided by serine 172 and threonine 192.

Belongs to the TRAFAC class OBG-HflX-like GTPase superfamily. OBG GTPase family. In terms of assembly, monomer. It depends on Mg(2+) as a cofactor.

It localises to the cytoplasm. In terms of biological role, an essential GTPase which binds GTP, GDP and possibly (p)ppGpp with moderate affinity, with high nucleotide exchange rates and a fairly low GTP hydrolysis rate. Plays a role in control of the cell cycle, stress response, ribosome biogenesis and in those bacteria that undergo differentiation, in morphogenesis control. This is GTPase Obg from Acidobacterium capsulatum (strain ATCC 51196 / DSM 11244 / BCRC 80197 / JCM 7670 / NBRC 15755 / NCIMB 13165 / 161).